The chain runs to 471 residues: 3-isopropylmalate dehydratase large subunit (471 aa).

Positions 349, 409, and 412 each coordinate [4Fe-4S] cluster.

It belongs to the aconitase/IPM isomerase family. LeuC type 1 subfamily. Heterodimer of LeuC and LeuD. It depends on [4Fe-4S] cluster as a cofactor.

The enzyme catalyses (2R,3S)-3-isopropylmalate = (2S)-2-isopropylmalate. The protein operates within amino-acid biosynthesis; L-leucine biosynthesis; L-leucine from 3-methyl-2-oxobutanoate: step 2/4. Its function is as follows. Catalyzes the isomerization between 2-isopropylmalate and 3-isopropylmalate, via the formation of 2-isopropylmaleate. The polypeptide is 3-isopropylmalate dehydratase large subunit (Aliivibrio salmonicida (strain LFI1238) (Vibrio salmonicida (strain LFI1238))).